The chain runs to 72 residues: UPF0352 protein swp_2271 (72 aa).

This sequence belongs to the UPF0352 family.

The protein is UPF0352 protein swp_2271 of Shewanella piezotolerans (strain WP3 / JCM 13877).